Here is a 700-residue protein sequence, read N- to C-terminus: Acyl-coenzyme A oxidase 2 (700 aa).

The protein belongs to the acyl-CoA oxidase family. As to quaternary structure, heteropentamer composed of five different subunits. It depends on FAD as a cofactor.

The protein resides in the peroxisome. The catalysed reaction is a 2,3-saturated acyl-CoA + O2 = a (2E)-enoyl-CoA + H2O2. Its pathway is lipid metabolism; peroxisomal fatty acid beta-oxidation. Functionally, oxidizes strain chain acyl-CoAs with a chain length of 10 to 14 carbons. Also active toward the 2S isomers of acyl-CoA-esters containing a 2-methyl group. The protein is Acyl-coenzyme A oxidase 2 (POX2) of Yarrowia lipolytica (strain CLIB 122 / E 150) (Yeast).